The sequence spans 127 residues: Probable soluble cytochrome b562 1 (127 aa).

The first 21 residues, Met-1 to Ala-21, serve as a signal peptide directing secretion. Met-28 and His-123 together coordinate heme b.

This sequence belongs to the cytochrome b562 family. The cofactor is heme b.

It localises to the periplasm. Electron-transport protein of unknown function. The protein is Probable soluble cytochrome b562 1 (cybC1) of Yersinia pestis.